The chain runs to 82 residues: Small ribosomal subunit protein bS16 (82 aa).

Belongs to the bacterial ribosomal protein bS16 family.

The chain is Small ribosomal subunit protein bS16 from Klebsiella pneumoniae (strain 342).